The following is a 163-amino-acid chain: Nucleotide-binding protein LBJ_2391 (163 aa).

Belongs to the YajQ family.

In terms of biological role, nucleotide-binding protein. This is Nucleotide-binding protein LBJ_2391 from Leptospira borgpetersenii serovar Hardjo-bovis (strain JB197).